We begin with the raw amino-acid sequence, 194 residues long: Inner membrane-spanning protein YciB (194 aa).

A run of 5 helical transmembrane segments spans residues 3 to 23 (LFIE…AGIY), 47 to 67 (IPAK…LTIY), 76 to 96 (WKVT…NTFF), 119 to 139 (LNLA…YIAF), and 149 to 169 (FKVF…ILFL).

This sequence belongs to the YciB family.

It is found in the cell inner membrane. Its function is as follows. Plays a role in cell envelope biogenesis, maintenance of cell envelope integrity and membrane homeostasis. The chain is Inner membrane-spanning protein YciB from Colwellia psychrerythraea (strain 34H / ATCC BAA-681) (Vibrio psychroerythus).